Reading from the N-terminus, the 153-residue chain is Large ribosomal subunit protein uL22 (153 aa).

The protein belongs to the universal ribosomal protein uL22 family. As to quaternary structure, part of the 50S ribosomal subunit.

This protein binds specifically to 23S rRNA. It makes multiple contacts with different domains of the 23S rRNA in the assembled 50S subunit and ribosome. Functionally, the globular domain of the protein is located near the polypeptide exit tunnel on the outside of the subunit, while an extended beta-hairpin is found that lines the wall of the exit tunnel in the center of the 70S ribosome. In Methanococcus maripaludis (strain DSM 14266 / JCM 13030 / NBRC 101832 / S2 / LL), this protein is Large ribosomal subunit protein uL22.